The sequence spans 208 residues: GTP cyclohydrolase 1 (208 aa).

Residues C89, H92, and C163 each contribute to the Zn(2+) site.

It belongs to the GTP cyclohydrolase I family. In terms of assembly, homomer.

It catalyses the reaction GTP + H2O = 7,8-dihydroneopterin 3'-triphosphate + formate + H(+). The protein operates within cofactor biosynthesis; 7,8-dihydroneopterin triphosphate biosynthesis; 7,8-dihydroneopterin triphosphate from GTP: step 1/1. The chain is GTP cyclohydrolase 1 from Saccharolobus islandicus (strain L.S.2.15 / Lassen #1) (Sulfolobus islandicus).